The following is a 548-amino-acid chain: Telomerase Cajal body protein 1 (548 aa).

The disordered stretch occupies residues 1-142 (MKTLETQPLA…SGEPAAEDEG (142 aa)). The span at 15 to 31 (PSDQDPAPAHPSPHASP) shows a compositional bias: low complexity. Residues serine 26, serine 30, and serine 54 each carry the phosphoserine modification. Serine 64 is modified (phosphoserine; by ATM). Phosphoserine occurs at positions 85, 90, 112, and 114. WD repeat units lie at residues 167–206 (QPEN…YHEG), 222–267 (EGDT…LRAS), 272–313 (NHLD…RDCE), 323–364 (GQSG…ALLG), 365–405 (GHQG…YPLW), and 411–450 (VTTN…NDGK). A Phosphothreonine modification is found at threonine 489. The residue at position 491 (serine 491) is a Phosphoserine. The disordered stretch occupies residues 526 to 548 (SIPDDHQGEKGQGGTEGGVGELI). Over residues 535 to 548 (KGQGGTEGGVGELI) the composition is skewed to gly residues.

It belongs to the TCAB1 family. As to quaternary structure, component of the telomerase holoenzyme complex composed of one molecule of TERT, one molecule of WRAP53/TCAB1, two molecules of H/ACA ribonucleoprotein complex subunits DKC1, NOP10, NHP2 and GAR1, and a telomerase RNA template component (TERC). The telomerase holoenzyme complex is associated with TEP1, SMG6/EST1A and POT1. Interacts with the chaperonin-containing T-complex (TRiC) complex; which mediates the folding of WRAP53/TCAB1. Interacts with COIL. Interacts with SMN1. Interacts with RNF8. Interacts with histone H2AX. Post-translationally, phosphorylated at Ser-64 by ATM in response to DNA damage, promoting its interaction with histone H2AX and localization to sites of DNA double-strand breaks. In terms of tissue distribution, expressed in all tissues and cell lines examined.

The protein localises to the nucleus. It localises to the cajal body. It is found in the chromosome. The protein resides in the telomere. Its function is as follows. RNA chaperone that plays a key role in telomere maintenance and RNA localization to Cajal bodies. Specifically recognizes and binds the Cajal body box (CAB box) present in both small Cajal body RNAs (scaRNAs) and telomerase RNA template component (TERC). Essential component of the telomerase holoenzyme complex, a ribonucleoprotein complex essential for the replication of chromosome termini that elongates telomeres in most eukaryotes. In the telomerase holoenzyme complex, required to stimulate the catalytic activity of the complex. Acts by specifically binding the CAB box of the TERC RNA and controlling the folding of the CR4/CR5 region of the TERC RNA, a critical step for telomerase activity. In addition, also controls telomerase holoenzyme complex localization to Cajal body. During S phase, required for delivery of TERC to telomeres during S phase and for telomerase activity. In addition to its role in telomere maintenance, also required for Cajal body formation, probably by mediating localization of scaRNAs to Cajal bodies. Also plays a role in DNA repair: phosphorylated by ATM in response to DNA damage and relocalizes to sites of DNA double-strand breaks to promote the repair of DNA double-strand breaks. Acts by recruiting the ubiquitin ligase RNF8 to DNA breaks and promote both homologous recombination (HR) and non-homologous end joining (NHEJ). In Homo sapiens (Human), this protein is Telomerase Cajal body protein 1.